A 532-amino-acid polypeptide reads, in one-letter code: GH3 domain-containing protein (532 aa).

The signal sequence occupies residues 1-18 (MLLLWLLLLLLLLVPLLA). Residues 100 to 123 (LTQTSHTQEQESEETLPSPASPQY) form a disordered region. N-linked (GlcNAc...) asparagine glycans are attached at residues Asn356 and Asn451.

The protein belongs to the GH3 family. Highly expressed in mammary tissues from mature virgins and at day 13 of pregnancy, and at lower level during lactation. Expressed at intermediate level in liver. Expressed at lower level in kidney, heart and brain.

The protein localises to the endoplasmic reticulum. It is found in the nucleus envelope. In Mus musculus (Mouse), this protein is GH3 domain-containing protein (Ghdc).